The primary structure comprises 158 residues: Rhombotin-2 (158 aa).

LIM zinc-binding domains lie at 30–89 and 94–153; these read CGGC…RLFG and CASC…EWTK.

Interacts via its LIM domains with ELF2 and LDB1. Interacts with BEX2 and KDM5A. Also interacts with basic helix-loop-helix protein TAL1/SCL and can assemble in a complex with LMO2 and TAL1/SCL.

The protein localises to the nucleus. Its function is as follows. Acts with TAL1/SCL to regulate red blood cell development. Also acts with LDB1 to maintain erythroid precursors in an immature state. This chain is Rhombotin-2 (LMO2), found in Bos taurus (Bovine).